The sequence spans 451 residues: 3-phosphoshikimate 1-carboxyvinyltransferase (451 aa).

Residues K28, S29, and R33 each coordinate 3-phosphoshikimate. K28 lines the phosphoenolpyruvate pocket. Phosphoenolpyruvate is bound by residues G105 and R133. Residues S178, Q180, D331, and K358 each coordinate 3-phosphoshikimate. A phosphoenolpyruvate-binding site is contributed by Q180. The Proton acceptor role is filled by D331. Phosphoenolpyruvate is bound by residues R362 and R406.

It belongs to the EPSP synthase family. In terms of assembly, monomer.

The protein localises to the cytoplasm. It catalyses the reaction 3-phosphoshikimate + phosphoenolpyruvate = 5-O-(1-carboxyvinyl)-3-phosphoshikimate + phosphate. Its pathway is metabolic intermediate biosynthesis; chorismate biosynthesis; chorismate from D-erythrose 4-phosphate and phosphoenolpyruvate: step 6/7. Functionally, catalyzes the transfer of the enolpyruvyl moiety of phosphoenolpyruvate (PEP) to the 5-hydroxyl of shikimate-3-phosphate (S3P) to produce enolpyruvyl shikimate-3-phosphate and inorganic phosphate. The polypeptide is 3-phosphoshikimate 1-carboxyvinyltransferase (Rhodospirillum rubrum (strain ATCC 11170 / ATH 1.1.1 / DSM 467 / LMG 4362 / NCIMB 8255 / S1)).